The sequence spans 192 residues: Epididymal-specific lipocalin-5 (192 aa).

The first 26 residues, 1–26 (MCSVARHMESIMLFTLLGLCVGLAAG), serve as a signal peptide directing secretion. Cys-89 and Cys-183 are disulfide-bonded.

Belongs to the calycin superfamily. Lipocalin family. Post-translationally, 2 different forms with differently processed N-termini exist. Epididymal fluid of the caudal and corpus regions (at protein level).

The protein resides in the secreted. In terms of biological role, associates with spermatozoa in the epididymal fluid but does not bind tightly to them. Binds both all-trans and 13-cis retinoic acid. May act as a retinoid carrier protein which is required for epididymal function and/or sperm maturation. This Mus musculus (Mouse) protein is Epididymal-specific lipocalin-5.